Consider the following 763-residue polypeptide: U3 small nucleolar RNA-associated protein 25 homolog (763 aa).

The interval 1-164 (MGKRRSRGRS…SQKSSEEFTD (164 aa)) is disordered. Promotes p53/TP53 degradation regions lie at residues 1 to 190 (MGKR…SQRT) and 580 to 642 (VQLP…KKEE). Serine 10 is subject to Phosphoserine. The segment covering 25–43 (RDFGEEHPFYDRVSKKEVK) has biased composition (basic and acidic residues). Phosphoserine is present on residues serine 52, serine 60, and serine 64. Positions 54-70 (DSSHSESESESEQEHVS) are enriched in basic and acidic residues. Acidic residues predominate over residues 84-119 (EEEEEEEEEEEEEEEDKEEVDDSAVGDSEMNGEDGG). The tract at residues 643-704 (LNFTHICEYT…YELPTYAHFY (62 aa)) is represses p53/TP53 degradation.

It belongs to the UTP25 family. In terms of assembly, interacts with CAPN3; the interaction is required for CAPN3 translocation to the nucleolus. In terms of processing, phosphorylated. Phosphorylation is required to promote p53/TP53 degradation in the nucleolus which promotes cell cycle progression and liver development.

The protein resides in the nucleus. It localises to the nucleolus. In terms of biological role, component of the ribosomal small subunit processome for the biogenesis of ribosomes, functions in pre-ribosomal RNA (pre-rRNA) processing. Essential for embryonic development in part through the regulation of p53 pathway. Controls the expansion growth of digestive organs and liver. Also involved in the sympathetic neuronal development. Mediates, with CAPN3, the proteasome-independent degradation of p53/TP53. This Rattus norvegicus (Rat) protein is U3 small nucleolar RNA-associated protein 25 homolog.